The sequence spans 569 residues: Pyrophosphate--fructose 6-phosphate 1-phosphotransferase subunit beta (569 aa).

Gly-107 lines the diphosphate pocket. Mg(2+) is bound at residue Asp-201. Residues Thr-229 to Asp-231, Lys-268 to Tyr-269, Met-276 to Arg-278, Glu-337, and Tyr-442 to Arg-445 each bind substrate. Asp-231 functions as the Proton acceptor in the catalytic mechanism.

This sequence belongs to the phosphofructokinase type A (PFKA) family. PPi-dependent PFK group II subfamily. Clade 'Long' sub-subfamily. In terms of assembly, tetramer of two alpha (regulatory) and two beta (catalytic) chains. Mg(2+) is required as a cofactor.

Its subcellular location is the cytoplasm. It carries out the reaction beta-D-fructose 6-phosphate + diphosphate = beta-D-fructose 1,6-bisphosphate + phosphate + H(+). Its pathway is carbohydrate degradation; glycolysis; D-glyceraldehyde 3-phosphate and glycerone phosphate from D-glucose: step 3/4. With respect to regulation, allosterically activated by fructose 2,6-bisphosphate. Functionally, catalytic subunit of pyrophosphate--fructose 6-phosphate 1-phosphotransferase. Catalyzes the phosphorylation of D-fructose 6-phosphate, the first committing step of glycolysis. Uses inorganic phosphate (PPi) as phosphoryl donor instead of ATP like common ATP-dependent phosphofructokinases (ATP-PFKs), which renders the reaction reversible, and can thus function both in glycolysis and gluconeogenesis. The chain is Pyrophosphate--fructose 6-phosphate 1-phosphotransferase subunit beta from Solanum tuberosum (Potato).